The sequence spans 301 residues: G-protein coupled receptor homolog U51 (301 aa).

Over 1–15 the chain is Extracellular; sequence MEKETKSLAWPATAE. The helical transmembrane segment at 16–36 threads the bilayer; that stretch reads FYGWVFIFSSIQLCTVVFLTV. Topologically, residues 37 to 48 are cytoplasmic; sequence RFNGFKVGREYA. The chain crosses the membrane as a helical span at residues 49–69; it reads VFTFAGMSFNCFLLPIKMGLL. Topologically, residues 70–82 are extracellular; it reads SGHWTLPRDFCAI. A helical transmembrane segment spans residues 83–103; it reads LLYIDDFSAYFSSWSLVFMAI. Over 104-122 the chain is Cytoplasmic; the sequence is ERINYFCYSTPLLNENSKA. The helical transmembrane segment at 123 to 143 threads the bilayer; that stretch reads LAKVCFPIVWVVSGVQALQML. Over 144-168 the chain is Extracellular; sequence NNYKATALQNETGQCFLAFLRSGHD. An N-linked (GlcNAc...) asparagine; by host glycan is attached at Asn-153. The chain crosses the membrane as a helical span at residues 169-189; that stretch reads MWLMLVYSVVIPVMLVFFYLY. Topologically, residues 190–199 are cytoplasmic; it reads SKNFMLLKDE. A helical transmembrane segment spans residues 200–220; that stretch reads LSSVTTYLCIYLLLGTIAHLP. Residues 221 to 238 are Extracellular-facing; the sequence is KAALSEIESDKIFYGLRD. The chain crosses the membrane as a helical span at residues 239-259; the sequence is IFMALPVLKVYYISAMAYCMA. The Cytoplasmic portion of the chain corresponds to 260–301; sequence CDDHTVPVRLCSIWLVNLCKKCFSCTRREKGSDLEVGIKMLK.

It belongs to the G-protein coupled receptor 1 family.

Its subcellular location is the host cell membrane. This Homo sapiens (Human) protein is G-protein coupled receptor homolog U51 (U51).